The primary structure comprises 72 residues: Sec-independent protein translocase protein TatA (72 aa).

A helical membrane pass occupies residues Met1–Phe21. A disordered region spans residues Lys41–Ser72.

This sequence belongs to the TatA/E family. As to quaternary structure, forms a complex with TatC.

It localises to the cell inner membrane. Functionally, part of the twin-arginine translocation (Tat) system that transports large folded proteins containing a characteristic twin-arginine motif in their signal peptide across membranes. TatA could form the protein-conducting channel of the Tat system. This Gloeobacter violaceus (strain ATCC 29082 / PCC 7421) protein is Sec-independent protein translocase protein TatA.